A 156-amino-acid polypeptide reads, in one-letter code: Small ribosomal subunit protein uS7 (156 aa).

This sequence belongs to the universal ribosomal protein uS7 family. As to quaternary structure, part of the 30S ribosomal subunit. Contacts proteins S9 and S11.

Its function is as follows. One of the primary rRNA binding proteins, it binds directly to 16S rRNA where it nucleates assembly of the head domain of the 30S subunit. Is located at the subunit interface close to the decoding center, probably blocks exit of the E-site tRNA. This chain is Small ribosomal subunit protein uS7, found in Colwellia psychrerythraea (strain 34H / ATCC BAA-681) (Vibrio psychroerythus).